We begin with the raw amino-acid sequence, 457 residues long: UDP-N-acetylmuramate--L-alanine ligase (457 aa).

G109 to T115 lines the ATP pocket.

Belongs to the MurCDEF family.

It is found in the cytoplasm. The enzyme catalyses UDP-N-acetyl-alpha-D-muramate + L-alanine + ATP = UDP-N-acetyl-alpha-D-muramoyl-L-alanine + ADP + phosphate + H(+). It functions in the pathway cell wall biogenesis; peptidoglycan biosynthesis. Its function is as follows. Cell wall formation. The polypeptide is UDP-N-acetylmuramate--L-alanine ligase (Thermotoga sp. (strain RQ2)).